Reading from the N-terminus, the 416-residue chain is D-amino acid dehydrogenase 2 (416 aa).

5 to 19 lines the FAD pocket; it reads VCIIGAGVVGLATAY.

It belongs to the DadA oxidoreductase family. FAD serves as cofactor.

The catalysed reaction is a D-alpha-amino acid + A + H2O = a 2-oxocarboxylate + AH2 + NH4(+). Functionally, oxidative deamination of D-amino acids. The sequence is that of D-amino acid dehydrogenase 2 (dadA2) from Pseudomonas aeruginosa (strain ATCC 15692 / DSM 22644 / CIP 104116 / JCM 14847 / LMG 12228 / 1C / PRS 101 / PAO1).